Consider the following 424-residue polypeptide: S-inosyl-L-homocysteine hydrolase (424 aa).

Residues Asp-130 and Glu-155 each contribute to the substrate site. 156 to 158 contributes to the NAD(+) binding site; that stretch reads TTT. Residues Lys-185 and Asp-189 each contribute to the substrate site. NAD(+)-binding positions include Asn-190, 219–224, Glu-242, Asn-277, 298–300, and Asn-346; these read GYGWCG and AGH.

The protein belongs to the adenosylhomocysteinase family. It depends on NAD(+) as a cofactor.

It localises to the cytoplasm. It catalyses the reaction S-inosyl-L-homocysteine + H2O = L-homocysteine + inosine. It participates in amino-acid biosynthesis; S-adenosyl-L-methionine biosynthesis. Its function is as follows. Catalyzes the hydrolysis of S-inosyl-L-homocysteine (SIH) to L-homocysteine (Hcy) and inosine. Likely functions in a S-adenosyl-L-methionine (SAM) recycling pathway from S-adenosyl-L-homocysteine (SAH) produced from SAM-dependent methylation reactions. Can also catalyze the reverse reaction in vitro, i.e. the synthesis of SIH from Hcy and inosine. This Methanopyrus kandleri (strain AV19 / DSM 6324 / JCM 9639 / NBRC 100938) protein is S-inosyl-L-homocysteine hydrolase.